The sequence spans 202 residues: Securin (202 aa).

The residue at position 2 (A2) is an N-acetylalanine. The disordered stretch occupies residues L35 to T94. The D-box motif lies at R61–L64. 2 short sequence motifs (TEK-box) span residues T71 to K73 and T94 to K96. An SH3-binding motif is present at residues P163 to P173. S165 carries the phosphoserine; by CDK1 modification.

Belongs to the securin family. Interacts with RPS10 and DNAJA1. Interacts with the caspase-like ESPL1, and prevents its protease activity probably by covering its active site. Interacts with TP53 and blocks its activity probably by blocking its binding to DNA. Interacts with the Ku 70 kDa subunit of ds-DNA kinase. Interacts with PTTG1IP. Phosphorylated at Ser-165 by CDK1 during mitosis. In terms of processing, phosphorylated in vitro by ds-DNA kinase. Post-translationally, ubiquitinated through 'Lys-11' linkage of ubiquitin moieties by the anaphase promoting complex (APC) at the onset of anaphase, conducting to its degradation. 'Lys-11'-linked ubiquitination is mediated by the E2 ligase UBE2C/UBCH10.

It is found in the cytoplasm. The protein localises to the nucleus. Its function is as follows. Regulatory protein, which plays a central role in chromosome stability, in the p53/TP53 pathway, and DNA repair. Probably acts by blocking the action of key proteins. During the mitosis, it blocks Separase/ESPL1 function, preventing the proteolysis of the cohesin complex and the subsequent segregation of the chromosomes. At the onset of anaphase, it is ubiquitinated, conducting to its destruction and to the liberation of ESPL1. Its function is however not limited to a blocking activity, since it is required to activate ESPL1. Negatively regulates the transcriptional activity and related apoptosis activity of TP53. The negative regulation of TP53 may explain the strong transforming capability of the protein when it is overexpressed. May also play a role in DNA repair via its interaction with Ku, possibly by connecting DNA damage-response pathways with sister chromatid separation. This is Securin (PTTG1) from Gorilla gorilla gorilla (Western lowland gorilla).